The primary structure comprises 219 residues: Translation initiation factor 6 (219 aa).

Belongs to the eIF-6 family.

Its function is as follows. Binds to the 50S ribosomal subunit and prevents its association with the 30S ribosomal subunit to form the 70S initiation complex. This Methanosarcina mazei (strain ATCC BAA-159 / DSM 3647 / Goe1 / Go1 / JCM 11833 / OCM 88) (Methanosarcina frisia) protein is Translation initiation factor 6.